The following is a 269-amino-acid chain: Nitrogen regulatory protein DAL80 (269 aa).

A GATA-type zinc finger spans residues 31–55 (CQNCFTVKTPLWRRDEHGTVLCNAC).

Its subcellular location is the nucleus. Negative regulator of multiple nitrogen catabolic genes including the allantoin pathway genes. The polypeptide is Nitrogen regulatory protein DAL80 (DAL80) (Saccharomyces cerevisiae (strain ATCC 204508 / S288c) (Baker's yeast)).